A 150-amino-acid polypeptide reads, in one-letter code: Large ribosomal subunit protein bL9 (150 aa).

This sequence belongs to the bacterial ribosomal protein bL9 family.

Its function is as follows. Binds to the 23S rRNA. The sequence is that of Large ribosomal subunit protein bL9 from Streptococcus pyogenes serotype M5 (strain Manfredo).